The sequence spans 208 residues: Large ribosomal subunit protein uL3 (208 aa).

The residue at position 149 (glutamine 149) is an N5-methylglutamine.

Belongs to the universal ribosomal protein uL3 family. Part of the 50S ribosomal subunit. Forms a cluster with proteins L14 and L19. Methylated by PrmB.

Functionally, one of the primary rRNA binding proteins, it binds directly near the 3'-end of the 23S rRNA, where it nucleates assembly of the 50S subunit. This Mannheimia succiniciproducens (strain KCTC 0769BP / MBEL55E) protein is Large ribosomal subunit protein uL3.